The chain runs to 508 residues: Cobyric acid synthase (508 aa).

The GATase cobBQ-type domain occupies 249 to 451 (EVDVAIINLP…IHGIFENSLF (203 aa)). Cys-330 serves as the catalytic Nucleophile. Residue His-443 is part of the active site.

This sequence belongs to the CobB/CobQ family. CobQ subfamily.

It participates in cofactor biosynthesis; adenosylcobalamin biosynthesis. Its function is as follows. Catalyzes amidations at positions B, D, E, and G on adenosylcobyrinic A,C-diamide. NH(2) groups are provided by glutamine, and one molecule of ATP is hydrogenolyzed for each amidation. In Caldanaerobacter subterraneus subsp. tengcongensis (strain DSM 15242 / JCM 11007 / NBRC 100824 / MB4) (Thermoanaerobacter tengcongensis), this protein is Cobyric acid synthase.